Consider the following 468-residue polypeptide: 6-phospho-beta-galactosidase (468 aa).

Residues glutamine 19, histidine 116, asparagine 159, glutamate 160, and asparagine 297 each contribute to the D-galactose 6-phosphate site. The active-site Proton donor is glutamate 160. The Nucleophile role is filled by glutamate 375. D-galactose 6-phosphate contacts are provided by serine 428, tryptophan 429, lysine 435, and tyrosine 437.

Belongs to the glycosyl hydrolase 1 family.

It carries out the reaction a 6-phospho-beta-D-galactoside + H2O = D-galactose 6-phosphate + an alcohol. It participates in carbohydrate metabolism; lactose degradation; D-galactose 6-phosphate and beta-D-glucose from lactose 6-phosphate: step 1/1. The protein is 6-phospho-beta-galactosidase of Streptococcus sanguinis (strain SK36).